Consider the following 122-residue polypeptide: Large ribosomal subunit protein uL14 (122 aa).

Belongs to the universal ribosomal protein uL14 family. As to quaternary structure, part of the 50S ribosomal subunit. Forms a cluster with proteins L3 and L19. In the 70S ribosome, L14 and L19 interact and together make contacts with the 16S rRNA in bridges B5 and B8.

Its function is as follows. Binds to 23S rRNA. Forms part of two intersubunit bridges in the 70S ribosome. The protein is Large ribosomal subunit protein uL14 of Sphingopyxis alaskensis (strain DSM 13593 / LMG 18877 / RB2256) (Sphingomonas alaskensis).